The primary structure comprises 473 residues: Cell division protein FtsZ homolog 2-2, chloroplastic (473 aa).

Residues 124-128 (GGGSN), 213-215 (GTG), E244, and R248 each bind GTP. Phosphothreonine; by PGK1 is present on T282. Residue D292 participates in GTP binding. Positions 424 to 455 (EEGEGRPLQATQADASMGATRRPSSSFTEGSS) are disordered. Residues 445-454 (RPSSSFTEGS) show a composition bias toward polar residues.

Belongs to the FtsZ family. As to quaternary structure, aggregates to form a contractile ring-like structure; contraction of the ring was accompanied by an increase in the filament turnover rate. Self-interacts and binds to FTSZ1 in heteropolymers to form two morphologically distinct types of filaments, termed type-I (smooth filaments) and -II (rough filaments), in a GTP-dependent manner. Part of a complex made of ARC3, ARC6, FTSZ1 and FTSZ2. Interacts (via C-terminus) with ARC6. Interacts with CDP1/PARC6. Binds to PGK1. In terms of processing, phosphorylation at Thr-282 is required for the formation of contractile ring at the chloroplast midpoint.

The protein localises to the plastid. Its subcellular location is the chloroplast stroma. It localises to the chloroplast thylakoid membrane. Its function is as follows. Exhibits GTPase activity. Component of the plastid division machinery that forms a contractile ring at the division site. Contributes to plastid division in the vegetative shoot apex, at the shoot apical meristem (SAM) where the proplastid-to-chloroplast transition takes place. In Arabidopsis thaliana (Mouse-ear cress), this protein is Cell division protein FtsZ homolog 2-2, chloroplastic.